The chain runs to 513 residues: Noroxomaritidine synthase 2 (513 aa).

The helical transmembrane segment at 14–34 threads the bilayer; that stretch reads HYPEILIAIACFLIFSLLLSA. Cys458 contributes to the heme binding site.

This sequence belongs to the cytochrome P450 family. It depends on heme as a cofactor. Mostly expressed in stems, and, to a lower extent, in bulbs, roots, leaves and flowers.

It is found in the membrane. It catalyses the reaction 4'-O-methylnorbelladine + reduced [NADPH--hemoprotein reductase] + O2 = (10bR,4aS)-noroxomaritidine + oxidized [NADPH--hemoprotein reductase] + 2 H2O + H(+). It carries out the reaction 4'-O-methylnorbelladine + reduced [NADPH--hemoprotein reductase] + O2 = (10bS,4aR)-noroxomaritidine + oxidized [NADPH--hemoprotein reductase] + 2 H2O + H(+). Its pathway is alkaloid biosynthesis. Functionally, cytochrome P450 that catalyzes an intramolecular para-para' C-C phenol coupling of 4'-O-methylnorbelladine in alkaloids biosynthesis, including haemanthamine- and crinamine-type alkaloids, promising anticancer agents. Catalyzes the formation of (10bR,4aS)-noroxomaritidine and (10bS,4aR)-noroxomaritidine from 4'-O-methylnorbelladine. In Narcissus pseudonarcissus (Daffodil), this protein is Noroxomaritidine synthase 2.